A 242-amino-acid chain; its full sequence is Small ribosomal subunit protein uS2 (242 aa).

It belongs to the universal ribosomal protein uS2 family.

The chain is Small ribosomal subunit protein uS2 from Shewanella frigidimarina (strain NCIMB 400).